Here is an 87-residue protein sequence, read N- to C-terminus: Small ribosomal subunit protein uS17 (87 aa).

The protein belongs to the universal ribosomal protein uS17 family. In terms of assembly, part of the 30S ribosomal subunit.

Functionally, one of the primary rRNA binding proteins, it binds specifically to the 5'-end of 16S ribosomal RNA. This chain is Small ribosomal subunit protein uS17, found in Neisseria gonorrhoeae (strain ATCC 700825 / FA 1090).